The sequence spans 290 residues: Barley B recombinant-like protein C (290 aa).

Disordered regions lie at residues 60–90 (PHHHHQPHHPRDCGTNANANGNGNGVGYGMM) and 102–183 (QPEP…RKNI). A compositionally biased stretch (pro residues) spans 104 to 116 (EPQPQLQHPPSPP). The segment covering 138 to 158 (PPKKRQQGRQPKVLRPKKPKK) has biased composition (basic residues).

The protein belongs to the BBR/BPC family.

The protein resides in the nucleus. In terms of biological role, transcriptional regulator that specifically binds to GA-rich elements (GAGA-repeats) present in regulatory sequences of genes involved in developmental processes. This chain is Barley B recombinant-like protein C, found in Oryza sativa subsp. japonica (Rice).